The chain runs to 517 residues: Crotonobetaine/carnitine--CoA ligase (517 aa).

The protein belongs to the ATP-dependent AMP-binding enzyme family.

The enzyme catalyses 4-(trimethylamino)butanoate + ATP + CoA = 4-(trimethylamino)butanoyl-CoA + AMP + diphosphate. It carries out the reaction crotonobetaine + ATP + CoA = crotonobetainyl-CoA + AMP + diphosphate. The catalysed reaction is (R)-carnitine + ATP + CoA = (R)-carnitinyl-CoA + AMP + diphosphate. It functions in the pathway amine and polyamine metabolism; carnitine metabolism. In terms of biological role, catalyzes the transfer of CoA to carnitine, generating the initial carnitinyl-CoA needed for the CaiB reaction cycle. Also has activity toward crotonobetaine and gamma-butyrobetaine. In Escherichia coli (strain ATCC 8739 / DSM 1576 / NBRC 3972 / NCIMB 8545 / WDCM 00012 / Crooks), this protein is Crotonobetaine/carnitine--CoA ligase.